A 592-amino-acid polypeptide reads, in one-letter code: Medium-chain-fatty-acid--[acyl-carrier-protein] ligase JamA (592 aa).

It belongs to the ATP-dependent AMP-binding enzyme family.

It carries out the reaction a medium-chain fatty acid + holo-[ACP] + ATP = a medium-chain fatty acyl-[ACP] + AMP + diphosphate. The enzyme catalyses a medium-chain fatty acid + ATP + H(+) = a medium-chain fatty acyl-AMP + diphosphate. The catalysed reaction is a medium-chain fatty acyl-AMP + holo-[ACP] = a medium-chain fatty acyl-[ACP] + AMP + H(+). In terms of biological role, ligase involved in the biosynthesis of jamaicamides, which show sodium channel blocking activity and fish toxicity. Initiates jamaicamide biosynthesis by the activation of the starter unit, 5-hexenoic acid, followed by the loading of the activated 5-hexenoic acid onto the acyl carrier protein JamC. In vitro, can also use 5-hexynoic acid, heptanoic acid, butanoic acid, hexanoic acid and benzoic acid. This chain is Medium-chain-fatty-acid--[acyl-carrier-protein] ligase JamA, found in Moorena producens (strain JHB).